Consider the following 116-residue polypeptide: Large ribosomal subunit protein bL17 (116 aa).

The protein belongs to the bacterial ribosomal protein bL17 family. As to quaternary structure, part of the 50S ribosomal subunit. Contacts protein L32.

The polypeptide is Large ribosomal subunit protein bL17 (Helicobacter acinonychis (strain Sheeba)).